A 514-amino-acid chain; its full sequence is Cytochrome P450 87A3 (514 aa).

2 helical membrane-spanning segments follow: residues 36-56 (ASSM…VALL) and 315-335 (LMFV…TIGV). A heme-binding site is contributed by C463.

Belongs to the cytochrome P450 family. It depends on heme as a cofactor. Expressed in roots and coleoptiles, but not in leaves.

It localises to the cytoplasmic vesicle membrane. This chain is Cytochrome P450 87A3 (CYP87A3), found in Oryza sativa subsp. japonica (Rice).